Consider the following 453-residue polypeptide: Ribulose bisphosphate carboxylase large chain (453 aa).

Residues 1 to 2 (MS) constitute a propeptide that is removed on maturation. Pro3 carries the post-translational modification N-acetylproline. Lys14 carries the N6,N6,N6-trimethyllysine modification. Asn123 and Thr173 together coordinate substrate. Lys175 (proton acceptor) is an active-site residue. Residue Lys177 coordinates substrate. The Mg(2+) site is built by Lys201, Asp203, and Glu204. Lys201 is subject to N6-carboxylysine. His294 functions as the Proton acceptor in the catalytic mechanism. Residues Arg295, His327, and Ser379 each coordinate substrate.

This sequence belongs to the RuBisCO large chain family. Type I subfamily. As to quaternary structure, heterohexadecamer of 8 large chains and 8 small chains; disulfide-linked. The disulfide link is formed within the large subunit homodimers. Mg(2+) is required as a cofactor. Post-translationally, the disulfide bond which can form in the large chain dimeric partners within the hexadecamer appears to be associated with oxidative stress and protein turnover.

It is found in the plastid. The protein localises to the chloroplast. The enzyme catalyses 2 (2R)-3-phosphoglycerate + 2 H(+) = D-ribulose 1,5-bisphosphate + CO2 + H2O. It catalyses the reaction D-ribulose 1,5-bisphosphate + O2 = 2-phosphoglycolate + (2R)-3-phosphoglycerate + 2 H(+). Its function is as follows. RuBisCO catalyzes two reactions: the carboxylation of D-ribulose 1,5-bisphosphate, the primary event in carbon dioxide fixation, as well as the oxidative fragmentation of the pentose substrate in the photorespiration process. Both reactions occur simultaneously and in competition at the same active site. This is Ribulose bisphosphate carboxylase large chain from Galium elongatum (Great marsh bedstraw).